The primary structure comprises 343 residues: Ribonucleoside-diphosphate reductase small subunit (343 aa).

The Fe cation site is built by Asp-101, Glu-131, and His-134. Tyr-138 is a catalytic residue. A helical transmembrane segment spans residues 188–208 (ILMILIEGIFFSASFAAIAYL). Positions 194, 228, and 231 each coordinate Fe cation.

This sequence belongs to the ribonucleoside diphosphate reductase small chain family. Heterotetramer composed of a homodimer of the large subunit (R1) and a homodimer of the small subunit (R2). Larger multisubunit protein complex are also active, composed of (R1)n(R2)n. It depends on Fe cation as a cofactor.

The protein localises to the host membrane. It catalyses the reaction a 2'-deoxyribonucleoside 5'-diphosphate + [thioredoxin]-disulfide + H2O = a ribonucleoside 5'-diphosphate + [thioredoxin]-dithiol. Its function is as follows. Ribonucleoside-diphosphate reductase holoenzyme provides the precursors necessary for viral DNA synthesis. Allows virus growth in non-dividing cells, as well as reactivation from latency in infected hosts. Catalyzes the biosynthesis of deoxyribonucleotides from the corresponding ribonucleotides. This Gallid herpesvirus 2 (strain Chicken/Md5/ATCC VR-987) (GaHV-2) protein is Ribonucleoside-diphosphate reductase small subunit.